The primary structure comprises 716 residues: MSQSGTMSCCPGATNGSLGRSDGVAKMSPKDLFEQRKKYSNSNVIMHETSQYHVQHLATFIMDKSEAITSVDDAIRKLVQLSSKEKIWTQEMLLQVNDQSLRLLDIESQEELENFPLPTVQRSQTVLNQLRYPSVLLLVCQDSEQSKPDVHFFHCDEVEAELVHEDIESALADCRLGKKMRPQTLKGHQEKIRQRQSILPPPQGPAPIPFQHRGGDSPQAKNRVGPQVPLSEPGFRRRESQEEEPRALLAQKIEKETQILNCALDDIEWFVARLQKAAEAFKQLNQRKKGKKKGKKAPAEGVLTLRARPPSEGEFIDCFQKTKLAINLLAKLQKHIQNPSAAELVHFLFGPLDLIVNTCGGPDIARSVSCPLLSRDAVDFLRGHLVPKEMSLWESLGESWMRPRSEWPWEPQVPLYVPKFHSGWEPPMDVLQEAPWEVEGLASAPIEEVSPVSRQSIRNSQKHSPTSEPTPPGDALPPVSSPHTHRGYQPTPAMAKYVKILYDFTARNANELSVLKDEVLEVLEDGRQWWKLRSRSGQAGYVPCNILGEARPEDAGAPFEQAGQKYWGPASPTHKLPPSFPGNKDELMQHMDEVNDELIRKISNIRAQPQRHFRVERSQPVSQPLTYESGPDEVRAWLEAKAFSPRIVENLGILTGPQLFSLNKEELKKVCGEEGVRVYSQLTVQKAFLEKQQSGSELEELMNKFHSMNQRRGEDS.

Disordered regions lie at residues 1-25 (MSQS…DGVA) and 182-243 (PQTL…SQEE). Residues 46–202 (MHETSQYHVQ…RQRQSILPPP (157 aa)) form the PID domain. Residues 199–208 (LPPPQGPAPI) show a composition bias toward pro residues. The span at 234–243 (GFRRRESQEE) shows a compositional bias: basic and acidic residues. Serine 240 carries the post-translational modification Phosphoserine. A Phosphothreonine modification is found at threonine 304. Residues 449 to 488 (VSPVSRQSIRNSQKHSPTSEPTPPGDALPPVSSPHTHRGY) form a disordered region. Serine 450 bears the Phosphoserine mark. Positions 452 to 467 (VSRQSIRNSQKHSPTS) are enriched in polar residues. Position 470 is a phosphothreonine (threonine 470). The SH3 domain maps to 493 to 552 (AMAKYVKILYDFTARNANELSVLKDEVLEVLEDGRQWWKLRSRSGQAGYVPCNILGEARP). Position 571 is a phosphoserine (serine 571).

The protein belongs to the EPS8 family. Interacts with ABI1. Part of a complex that contains SOS1, ABI1 and EPS8L2. Associates with F-actin.

It is found in the cytoplasm. It localises to the cell projection. The protein localises to the stereocilium. In terms of biological role, stimulates guanine exchange activity of SOS1. May play a role in membrane ruffling and remodeling of the actin cytoskeleton. In the cochlea, is required for stereocilia maintenance in adult hair cells. The polypeptide is Epidermal growth factor receptor kinase substrate 8-like protein 2 (EPS8L2) (Pongo abelii (Sumatran orangutan)).